The sequence spans 66 residues: Cold shock protein CspC (66 aa).

The 60-residue stretch at 4–63 (GTVKWFNAEKGFGFIERENGDDVFVHFSAIQSDGFKSLDEGQKVSFDVEQGARGAQAANV) folds into the CSD domain.

Its subcellular location is the cytoplasm. This is Cold shock protein CspC (cspC) from Bacillus subtilis (strain 168).